The chain runs to 600 residues: Aspartate--tRNA ligase (600 aa).

Residue Glu-175 participates in L-aspartate binding. The aspartate stretch occupies residues 199 to 202 (QLFK). Arg-221 provides a ligand contact to L-aspartate. ATP contacts are provided by residues 221–223 (RDE) and Gln-230. L-aspartate is bound at residue His-448. Glu-484 lines the ATP pocket. Arg-491 provides a ligand contact to L-aspartate. Position 536–539 (536–539 (GLDR)) interacts with ATP.

It belongs to the class-II aminoacyl-tRNA synthetase family. Type 1 subfamily. As to quaternary structure, homodimer.

It localises to the cytoplasm. The catalysed reaction is tRNA(Asp) + L-aspartate + ATP = L-aspartyl-tRNA(Asp) + AMP + diphosphate. Catalyzes the attachment of L-aspartate to tRNA(Asp) in a two-step reaction: L-aspartate is first activated by ATP to form Asp-AMP and then transferred to the acceptor end of tRNA(Asp). The sequence is that of Aspartate--tRNA ligase from Limosilactobacillus reuteri (strain DSM 20016) (Lactobacillus reuteri).